The sequence spans 263 residues: Orotidine 5'-phosphate decarboxylase (263 aa).

Residues aspartate 36, 58 to 60 (KTH), 90 to 99 (DRKFADIGNT), tyrosine 216, and arginine 234 each bind substrate. The active-site Proton donor is the lysine 92.

It belongs to the OMP decarboxylase family.

The catalysed reaction is orotidine 5'-phosphate + H(+) = UMP + CO2. The protein operates within pyrimidine metabolism; UMP biosynthesis via de novo pathway; UMP from orotate: step 2/2. The chain is Orotidine 5'-phosphate decarboxylase (URA3) from Komagataella pastoris (Yeast).